The primary structure comprises 437 residues: Elongation factor 1-gamma-B (437 aa).

The 86-residue stretch at 2 to 87 (AGGTLYTYPD…YVANDELRGS (86 aa)) folds into the GST N-terminal domain. The region spanning 89–222 (NRLHQAQVIQ…KMAQFDAKKF (134 aa)) is the GST C-terminal domain. Basic and acidic residues predominate over residues 225–240 (VQPKKETPKKEKPAKE). The segment at 225-279 (VQPKKETPKKEKPAKEPKKKKKKKKKATPAPAPAPEDDLDESEKALAAEPKSKDP) is disordered. Positions 241–251 (PKKKKKKKKKA) are enriched in basic residues. Over residues 266–279 (SEKALAAEPKSKDP) the composition is skewed to basic and acidic residues. The EF-1-gamma C-terminal domain occupies 276–437 (SKDPYAHLPK…KAFNQGKIFK (162 aa)).

As to quaternary structure, EF-1 is composed of four subunits: alpha, beta, delta, and gamma.

Its function is as follows. Probably plays a role in anchoring the complex to other cellular components. The sequence is that of Elongation factor 1-gamma-B (eef1g-b) from Xenopus laevis (African clawed frog).